The following is a 769-amino-acid chain: DNA gyrase subunit B (769 aa).

The Toprim domain occupies Ser-414–Pro-528. Residues Glu-420, Asp-493, and Asp-495 each contribute to the Mg(2+) site.

Belongs to the type II topoisomerase GyrB family. As to quaternary structure, heterotetramer, composed of two GyrA and two GyrB chains. In the heterotetramer, GyrA contains the active site tyrosine that forms a transient covalent intermediate with DNA, while GyrB binds cofactors and catalyzes ATP hydrolysis. The cofactor is Mg(2+). It depends on Mn(2+) as a cofactor. Ca(2+) is required as a cofactor.

Its subcellular location is the cytoplasm. The catalysed reaction is ATP-dependent breakage, passage and rejoining of double-stranded DNA.. In terms of biological role, a type II topoisomerase that negatively supercoils closed circular double-stranded (ds) DNA in an ATP-dependent manner to modulate DNA topology and maintain chromosomes in an underwound state. Negative supercoiling favors strand separation, and DNA replication, transcription, recombination and repair, all of which involve strand separation. Also able to catalyze the interconversion of other topological isomers of dsDNA rings, including catenanes and knotted rings. Type II topoisomerases break and join 2 DNA strands simultaneously in an ATP-dependent manner. In Campylobacter jejuni subsp. jejuni serotype O:2 (strain ATCC 700819 / NCTC 11168), this protein is DNA gyrase subunit B.